The sequence spans 196 residues: Holliday junction branch migration complex subunit RuvA (196 aa).

The interval 1–62 (MYEYINGLIT…ENDISLYGFI (62 aa)) is domain I. The interval 63-141 (DADEKALFNK…ELASKTGMVD (79 aa)) is domain II. Residues 142–148 (SSSNPEQ) form a flexible linker region. The segment at 148–196 (QSQALDDALEALLALGYTAKDVKAVAQIIGRNSDTTDGYIRSALKLLVK) is domain III.

Belongs to the RuvA family. Homotetramer. Forms an RuvA(8)-RuvB(12)-Holliday junction (HJ) complex. HJ DNA is sandwiched between 2 RuvA tetramers; dsDNA enters through RuvA and exits via RuvB. An RuvB hexamer assembles on each DNA strand where it exits the tetramer. Each RuvB hexamer is contacted by two RuvA subunits (via domain III) on 2 adjacent RuvB subunits; this complex drives branch migration. In the full resolvosome a probable DNA-RuvA(4)-RuvB(12)-RuvC(2) complex forms which resolves the HJ.

It is found in the cytoplasm. Its function is as follows. The RuvA-RuvB-RuvC complex processes Holliday junction (HJ) DNA during genetic recombination and DNA repair, while the RuvA-RuvB complex plays an important role in the rescue of blocked DNA replication forks via replication fork reversal (RFR). RuvA specifically binds to HJ cruciform DNA, conferring on it an open structure. The RuvB hexamer acts as an ATP-dependent pump, pulling dsDNA into and through the RuvAB complex. HJ branch migration allows RuvC to scan DNA until it finds its consensus sequence, where it cleaves and resolves the cruciform DNA. This Leuconostoc mesenteroides subsp. mesenteroides (strain ATCC 8293 / DSM 20343 / BCRC 11652 / CCM 1803 / JCM 6124 / NCDO 523 / NBRC 100496 / NCIMB 8023 / NCTC 12954 / NRRL B-1118 / 37Y) protein is Holliday junction branch migration complex subunit RuvA.